Consider the following 481-residue polypeptide: Protein hedgehog (481 aa).

C93 carries N-palmitoyl cysteine lipidation. Positions 157, 158, 163, 193, 194, 197, and 199 each coordinate Ca(2+). Residue G265 is the site of Cholesterol glycine ester attachment.

It belongs to the hedgehog family. As to quaternary structure, interacts with shf. In terms of processing, the C-terminal part of the hedgehog protein precursor displays an autoproteolysis activity that results in the cleavage of the full-length protein into two parts (N-product and C-product). In addition, the C-terminal part displays a cholesterol transferase activity that results by the covalent attachment of a cholesterol moiety to the C-terminal of the newly generated N-product. The N-product is the active species in both local and long-range signaling, whereas the C-product has no signaling activity. Cholesterylation is required for N-product targeting to lipid rafts and multimerization. Post-translationally, N-palmitoylation by Rasp of the hedgehog N-product, within the secretory pathway, is required for the embryonic and larval patterning activities of the hedgehog signal.

It is found in the nucleus. The protein localises to the cytoplasm. The protein resides in the cell membrane. It carries out the reaction glycyl-L-cysteinyl-[protein] + cholesterol + H(+) = [protein]-C-terminal glycyl cholesterol ester + N-terminal L-cysteinyl-[protein]. In terms of biological role, the C-terminal part of the hedgehog protein precursor displays an autoproteolysis activity that results in the cleavage of the full-length protein into two parts (N-product and C-product). In addition, the C-terminal part displays a cholesterol transferase activity that results by the covalent attachment of a cholesterol moiety to the C-terminal of the newly generated N-product. Once cleaved, the C-product has no signaling activity and diffuses from the cell. Its function is as follows. The dually lipidated hedgehog protein N-product is a morphogen which is essential for a variety of patterning events during development. Establishes the anterior-posterior axis of the embryonic segments and patterns the larval imaginal disks. Binds to the patched (ptc) receptor, which functions in association with smoothened (smo), to activate the transcription of target genes wingless (wg), decapentaplegic (dpp) and ptc. In the absence of hh, ptc represses the constitutive signaling activity of smo through fused (fu). Essential component of a signaling pathway which regulates the Duox-dependent gut immune response to bacterial uracil; required to activate Cad99C-dependent endosome formation, norpA-dependent Ca2+ mobilization and p38 MAPK, which are essential steps in the Duox-dependent production of reactive oxygen species (ROS) in response to intestinal bacterial infection. During photoreceptor differentiation, it up-regulates transcription of Ubr3, which in turn promotes the hh-signaling pathway by mediating the ubiquitination and degradation of cos. This is Protein hedgehog (hh-1) from Drosophila pseudoobscura pseudoobscura (Fruit fly).